We begin with the raw amino-acid sequence, 846 residues long: Translation initiation factor IF-2 (846 aa).

Positions 198–219 are disordered; that stretch reads YKREEEEKKSKAKKAGGKGFKK. Residues 207–219 show a composition bias toward basic residues; the sequence is SKAKKAGGKGFKK. The 168-residue stretch at 345–512 folds into the tr-type G domain; the sequence is SRAPVVTIMG…AVLLQSEVLE (168 aa). The tract at residues 354–361 is G1; that stretch reads GHVDHGKT. 354-361 contributes to the GTP binding site; the sequence is GHVDHGKT. A G2 region spans residues 379–383; that stretch reads GITQH. The segment at 400 to 403 is G3; that stretch reads DTPG. GTP contacts are provided by residues 400-404 and 454-457; these read DTPGH and NKID. Positions 454 to 457 are G4; it reads NKID. The tract at residues 490–492 is G5; the sequence is SAK.

This sequence belongs to the TRAFAC class translation factor GTPase superfamily. Classic translation factor GTPase family. IF-2 subfamily.

It localises to the cytoplasm. One of the essential components for the initiation of protein synthesis. Protects formylmethionyl-tRNA from spontaneous hydrolysis and promotes its binding to the 30S ribosomal subunits. Also involved in the hydrolysis of GTP during the formation of the 70S ribosomal complex. This chain is Translation initiation factor IF-2, found in Francisella tularensis subsp. holarctica (strain OSU18).